A 230-amino-acid chain; its full sequence is Flagellar L-ring protein (230 aa).

Residues 1–15 (MSRLPSLSRLCLAIA) form the signal peptide. A lipid anchor (N-palmitoyl cysteine) is attached at C16. C16 carries the S-diacylglycerol cysteine lipid modification.

This sequence belongs to the FlgH family. As to quaternary structure, the basal body constitutes a major portion of the flagellar organelle and consists of four rings (L,P,S, and M) mounted on a central rod.

The protein localises to the cell outer membrane. It is found in the bacterial flagellum basal body. In terms of biological role, assembles around the rod to form the L-ring and probably protects the motor/basal body from shearing forces during rotation. The chain is Flagellar L-ring protein from Xanthomonas euvesicatoria pv. vesicatoria (strain 85-10) (Xanthomonas campestris pv. vesicatoria).